The primary structure comprises 101 residues: Enhancer of yellow 2 transcription factor (101 aa).

This sequence belongs to the ENY2 family. Component of the nuclear pore complex (NPC)-associated TREX-2/AMEX complex (anchoring and mRNA export complex), composed of e(y)2, xmas and PCID2. Within the TREX-2/ AMEX complex, interactions with xmas is required for localization to the nuclear periphery. Component of the SAGA transcription coactivator-HAT complexes, at least composed of Ada2b, e(y)2, Pcaf/Gcn5, Taf10 and Nipped-A/Trrap. Within the SAGA complex, e(y)2, Sgf11, and not/nonstop form an additional subcomplex of SAGA called the DUB module (deubiquitination module). Component of the THO complex, composed of at least e(y)2, HPR1, THO2, THOC5, THOC6 and THOC7. Interacts with Taf9. Interacts with su(Hw) (via zinc fingers). Interacts with the nuclear pore complex (NPC). Interaction between the TREX-2/AMEX complex and the ORC complex is required for ORC localization to mRNPs, and consequently mRNA export. Within the TREX-2/AMEX-ORC complex, interacts with Orc6 and (via N-terminus or C-terminus) with Orc3. Interacts with the zinc finger protein CG9890. In terms of tissue distribution, ubiquitous.

Its subcellular location is the nucleus. It localises to the nucleoplasm. The protein localises to the cytoplasm. It is found in the nucleus membrane. Its function is as follows. Involved in mRNA export coupled transcription activation by association with both the TREX-2/AMEX and the SAGA complexes. The SAGA complex is a multiprotein complex that activates transcription by remodeling chromatin and mediating histone acetylation and deubiquitination. Within the SAGA complex, participates in a subcomplex that specifically deubiquitinates histone H2B. The SAGA complex is recruited to specific gene promoters by activators, where it is required for transcription. Required for nuclear receptor-mediated transactivation. Involved in transcription elongation by recruiting the THO complex onto nascent mRNA. The TREX-2/AMEX complex functions in docking export-competent ribonucleoprotein particles (mRNPs) to the nuclear entrance of the nuclear pore complex (nuclear basket). TREX-2/AMEX participates in mRNA export and accurate chromatin positioning in the nucleus by tethering genes to the nuclear periphery. Recruited to the su(Hw) insulators via its interaction with su(Hw) and participates in the barrier activity of such insulators. In contrast, it does not participate in the enhancer-blocking activity of the su(Hw) insulators. This is Enhancer of yellow 2 transcription factor from Drosophila melanogaster (Fruit fly).